The chain runs to 609 residues: Pescadillo homolog (609 aa).

The 94-residue stretch at 320–413 (KLKNLFKGLK…KLLPTNKYFI (94 aa)) folds into the BRCT domain. Disordered regions lie at residues 443–462 (DEFEKQERAEGISDDEDEDF) and 488–609 (ALNS…EILA). Composition is skewed to basic and acidic residues over residues 444–453 (EFEKQERAEG) and 488–498 (ALNSGEAKKEQ). A coiled-coil region spans residues 481–509 (FREEKAEALNSGEAKKEQAEEDNEDDDQE). Residues 499–512 (AEEDNEDDDQEPDQ) are compositionally biased toward acidic residues. 2 stretches are compositionally biased toward basic and acidic residues: residues 513 to 524 (DETKKQRSEKKQ) and 533 to 552 (VFKENPKEQKQLTKQEEALR). Residues 539-607 (KEQKQLTKQE…QKRKAQRKEI (69 aa)) are a coiled coil. The span at 554–564 (KMVKSRHKKLY) shows a compositional bias: basic residues. Basic and acidic residues predominate over residues 567–609 (LLDKQKKATKEANLLREKRQQIDKQKRKEQTQKRKAQRKEILA).

This sequence belongs to the pescadillo family.

It is found in the nucleus. The protein resides in the nucleolus. The protein localises to the nucleoplasm. Required for maturation of ribosomal RNAs and formation of the large ribosomal subunit. The protein is Pescadillo homolog of Aedes aegypti (Yellowfever mosquito).